A 266-amino-acid polypeptide reads, in one-letter code: MRLIPLKAAAQVGKWAAAHIVKRINEFQPTAERPFVLGLPTGGTPLATYKALIEMHKAGEVSFKHVVTFNMDEYVGLAADHPESYRSFMYNNFFNHIDIQEENINLLNGNTDDHEAECKRYEDKIKSYGKINLFMGGVGNDGHIAFNEPASSLSSRTRIKTLTEDTRIANSRFFDGDINQVPKYALTIGVGTLLDAQEIMILVTGHNKALALQAAVEGSVNHLWTVSALQLHPKAVIVCDEPSTQELKVKTVKYFTELEAKNIVGF.

D72 functions as the Proton acceptor; for enolization step in the catalytic mechanism. D141 functions as the For ring-opening step in the catalytic mechanism. H143 serves as the catalytic Proton acceptor; for ring-opening step. Residue E148 is the For ring-opening step of the active site.

It belongs to the glucosamine/galactosamine-6-phosphate isomerase family. NagB subfamily. As to quaternary structure, homohexamer.

It carries out the reaction alpha-D-glucosamine 6-phosphate + H2O = beta-D-fructose 6-phosphate + NH4(+). It functions in the pathway amino-sugar metabolism; N-acetylneuraminate degradation; D-fructose 6-phosphate from N-acetylneuraminate: step 5/5. With respect to regulation, allosterically activated by N-acetylglucosamine 6-phosphate (GlcNAc6P). In terms of biological role, catalyzes the reversible isomerization-deamination of glucosamine 6-phosphate (GlcN6P) to form fructose 6-phosphate (Fru6P) and ammonium ion. This is Glucosamine-6-phosphate deaminase from Vibrio cholerae serotype O1 (strain ATCC 39541 / Classical Ogawa 395 / O395).